Here is a 211-residue protein sequence, read N- to C-terminus: Endonuclease Htp3 (211 aa).

An N-terminal signal peptide occupies residues 1-20; the sequence is MLEVPVWIPILAFAVGLGLG. The RxLR motif lies at 48–51; it reads RTLR. A TNase-like domain is found at 48 to 198; sequence RTLRGKVVSV…REKRVNIWSL (151 aa). D77 contributes to the Ca(2+) binding site. R90 is a catalytic residue. D95 provides a ligand contact to Ca(2+). Residues E98 and R138 contribute to the active site. N153 is a glycosylation site (N-linked (GlcNAc...) asparagine). A binding to the host cell surface region spans residues 200-211; it reads KRETPAQYKARK.

The protein in the N-terminal section; belongs to the RxLR effector family. In the C-terminal section; belongs to the LCL3 family. Interacts with the host cell surface endoplasmin gp96, in order to get translocated into to host cell. Interacts with the effector Htp1, in order to get released from vesicles into the host cytosol.

The protein resides in the secreted. Its subcellular location is the host cytoplasm. The protein localises to the host cytosol. Its activity is regulated as follows. The nuclease activity shows a general salt dependency with a clear reduction by magnesium and sulfate ions. In terms of biological role, effector involved in the disease saprolegniosis in salmonids and other freshwater fish, resulting in considerable economic losses in aquaculture. Within the host fish cells, Htp3 is released from vesicles into host cytosol where it degrades nucleic acids. The polypeptide is Endonuclease Htp3 (HTP3) (Saprolegnia parasitica (strain CBS 223.65)).